Here is a 242-residue protein sequence, read N- to C-terminus: Probable pectate lyase D (242 aa).

Positions 1-17 are cleaved as a signal peptide; that stretch reads MYQKSLLFSLLASSALA. Asn-216 carries N-linked (GlcNAc...) asparagine glycosylation. Positions 217–242 are disordered; the sequence is DTGAEPEEISEGPSDACQYSEPLSSC.

Belongs to the polysaccharide lyase 3 family. Ca(2+) serves as cofactor.

The protein localises to the secreted. It carries out the reaction Eliminative cleavage of (1-&gt;4)-alpha-D-galacturonan to give oligosaccharides with 4-deoxy-alpha-D-galact-4-enuronosyl groups at their non-reducing ends.. Pectinolytic enzyme consist of four classes of enzymes: pectin lyase, polygalacturonase, pectin methylesterase and rhamnogalacturonase. Among pectinolytic enzymes, pectin lyase is the most important in depolymerization of pectin, since it cleaves internal glycosidic bonds of highly methylated pectins. Favors pectate, the anion, over pectin, the methyl ester. This Aspergillus fumigatus (strain CBS 144.89 / FGSC A1163 / CEA10) (Neosartorya fumigata) protein is Probable pectate lyase D (plyD).